The primary structure comprises 713 residues: MAAAAAAVVGWLGWVLAAFCLGSTAGEAAPAPGAGLLNFCTEEDSAPGAGSLRGRAAPEATLCLRLFCSGLANSSWTWVAAEGAGCPEGGRATEPEEAAAPTGEWRALLRLRAEAGHPRSALLAVRVEPGGGAAEEAAPPWALGLGAAGLLALAAVARGLQLSALALAPAEVQVLRESGSEAERAAARRLEPARRWAGCALGALLLLASLAQAALAVLLYGAAGQRAVPAVLGCAGLVFLVGEVLPAAVSGRWALALAPRALGLSRLAVLLTLPVALPVGQLLELAARPGRLRERVLELARGGGDPYSDLSKGVLRSRTVEDVLTPLEDCFMLDSGTVLDFSVLASIMQSGHTRIPVYEEERSNIVDMLYLKDLAIVEPEDCTPLSTITRFYNHPLHFVFNDTKLDAVLEEFKRGKSHLAIVQKVNNEGEGDPFYEVLGLVTLEDVIEEIIKSEILDESEDYSDTKVRKKTVALGAPLKRKEEFSLFKVSDDEYKVKISPQLLLATQRFLSREVDVFSPLRVSEKVLLHLLKHPSVNQEVTFDESNRLAAHHYLYQRSQPVDYFILILQGRVEVEIGKEGLKFENGAFTYYGVSALTAPSSAHQSPVSSRQLIRHDVQPEPADGTRSCTYCPDYTVRALSDLQLIKVTRLQYLNALLATRAQSLPPSPENAELQAIPGSQTRLLGDKSRETAGSTNSRPSIPVEESPGRNPGV.

The chain crosses the membrane as a helical span at residues 7–29 (AVVGWLGWVLAAFCLGSTAGEAA). An N-linked (GlcNAc...) asparagine glycan is attached at asparagine 73. Positions 136-314 (EAAPPWALGL…DPYSDLSKGV (179 aa)) constitute a CNNM transmembrane domain. Transmembrane regions (helical) follow at residues 137–157 (AAPPWALGLGAAGLLALAAVA), 199–219 (CALGALLLLASLAQAALAVLL), 227–247 (AVPAVLGCAGLVFLVGEVLPA), and 267–287 (LAVLLTLPVALPVGQLLELAA). 2 consecutive CBS domains span residues 324-385 (LTPL…CTPL) and 392-458 (YNHP…ILDE). Residues 664–713 (LPPSPENAELQAIPGSQTRLLGDKSRETAGSTNSRPSIPVEESPGRNPGV) form a disordered region. Residues serine 667 and serine 706 each carry the phosphoserine modification.

Belongs to the ACDP family. As to expression, widely expressed with highest levels in brain, kidney, liver, lung and heart.

It is found in the cell membrane. Its function is as follows. Probable metal transporter. This is Metal transporter CNNM3 (Cnnm3) from Mus musculus (Mouse).